The chain runs to 65 residues: Adrenergic toxin rho-elapitoxin-Dp1b (65 aa).

4 disulfide bridges follow: cysteine 3–cysteine 24, cysteine 17–cysteine 42, cysteine 46–cysteine 57, and cysteine 58–cysteine 63.

It belongs to the three-finger toxin family. Short-chain subfamily. Aminergic toxin sub-subfamily. In terms of tissue distribution, expressed by the venom gland.

The protein resides in the secreted. Highly potent on various alpha-adrenoceptors (ADRA) (subnanomolar affinity for ADRA1A). Order of potency is the following: ADRA1A (Ki=0.37 nM) &gt; ADRA1B (Ki=10.47 nM) &gt; ADRA1D (Ki=104.71 nM) &gt; ADRA2C (Ki=165.96 nM). Were also found to reversibly bind to muscarinic acetylcholine receptors (CHRM), but the affinity is much weaker (CHRM1, Ki=1778.28 nM; CHRM4, Ki=4466.84 nM; CHRM2, Ki=17782.79 nM). The protein is Adrenergic toxin rho-elapitoxin-Dp1b of Dendroaspis polylepis polylepis (Black mamba).